Reading from the N-terminus, the 197-residue chain is Imidazoleglycerol-phosphate dehydratase (197 aa).

The protein belongs to the imidazoleglycerol-phosphate dehydratase family.

The protein localises to the cytoplasm. It carries out the reaction D-erythro-1-(imidazol-4-yl)glycerol 3-phosphate = 3-(imidazol-4-yl)-2-oxopropyl phosphate + H2O. It functions in the pathway amino-acid biosynthesis; L-histidine biosynthesis; L-histidine from 5-phospho-alpha-D-ribose 1-diphosphate: step 6/9. The chain is Imidazoleglycerol-phosphate dehydratase from Pseudomonas putida (strain GB-1).